Reading from the N-terminus, the 117-residue chain is Ig heavy chain V region 108A (117 aa).

A signal peptide spans M1–S19. The region spanning E20–R117 is the Ig-like domain.

This Mus musculus (Mouse) protein is Ig heavy chain V region 108A (Igh-VJ558).